The sequence spans 378 residues: MGQSKKLNKQPSSLSPLVQLAGIRKCFDGKEVISQLDLTINNGEFLTLLGPSGCGKTTVLRLIAGLETVDSGRIMLDNEDITHVPAENRYVNTVFQSYALFPHMTVFENVAFGLRMQKTPAAEITPRVMEALRMVQLETFAQRKPHQLSGGQQQRVAIARAVVNKPRLLLLDESLSALDYKLRKQMQNELKALQRKLGITFVFVTHDQEEALTMSDRIVVMRDGRIEQDGTPREIYEEPKNLFVAGFIGEINMFNATVIERLDEQRVRANVEGRECNIYVNFAVEPGQKLHVLLRPEDLRVEEINDDNHAEGLIGYVRERNYKGMTLESVVELENGKMVMVSEFFNEDDPDFDHSLDQKMAINWVESWEVVLADEEHK.

An ABC transporter domain is found at 18–248; that stretch reads VQLAGIRKCF…PKNLFVAGFI (231 aa). Residue 50–57 participates in ATP binding; sequence GPSGCGKT.

It belongs to the ABC transporter superfamily. Spermidine/putrescine importer (TC 3.A.1.11.1) family. As to quaternary structure, the complex is composed of two ATP-binding proteins (PotA), two transmembrane proteins (PotB and PotC) and a solute-binding protein (PotD).

The protein localises to the cell inner membrane. The enzyme catalyses ATP + H2O + polyamine-[polyamine-binding protein]Side 1 = ADP + phosphate + polyamineSide 2 + [polyamine-binding protein]Side 1.. In terms of biological role, part of the ABC transporter complex PotABCD involved in spermidine/putrescine import. Responsible for energy coupling to the transport system. The sequence is that of Spermidine/putrescine import ATP-binding protein PotA from Shigella dysenteriae serotype 1 (strain Sd197).